The sequence spans 691 residues: Pentatricopeptide repeat-containing protein At4g37170 (691 aa).

PPR repeat units lie at residues 84-118 (PAST…GFVP), 119-149 (GIVI…MPNR), 150-184 (DLCS…DSYS), 185-211 (WTAM…MQRV), 217-251 (NIFT…GLDS), 252-286 (DEVL…DVVS), 287-317 (WTSM…CERP), 318-352 (NEYT…GFDP), 353-383 (YSFA…CPKP), 384-418 (DLVS…GTKP), 419-449 (DHVT…ITEK), and 455-485 (TSDH…MPMK). The type E motif stretch occupies residues 490 to 565 (LWASVLGGCS…RPGSSWTEIK (76 aa)). A type E(+) motif region spans residues 566–596 (RKRHVFIAADTSHPMYNQIVEFLRELRKKMK). Positions 597 to 691 (EEGYVPATSL…NGQCSCGDYW (95 aa)) are type DYW motif.

It belongs to the PPR family. PCMP-H subfamily.

The chain is Pentatricopeptide repeat-containing protein At4g37170 (PCMP-H5) from Arabidopsis thaliana (Mouse-ear cress).